A 240-amino-acid polypeptide reads, in one-letter code: MLLQGALLLLLALPSHGEDNMEDPPLPKGACAGWMAGIPGHPGHNGTPGRDGRDGTPGEKGEKGDPGLVGPKGDTGETGITGIEGPRGFPGTPGRKGEPGESAYVYRSAFSVGLERQVTVPNVPIRFTKIFYNQQNHYDGTTGKFLCNIPGLYYFSYHITVYLKDVKVSLYKNDKALLFTHDQFQDKNVDQASGSVLLYLEKGDQVWLQVYEGENHNGVYADNVNDSTFTGFLLYHNIVE.

Positions 1-17 are cleaved as a signal peptide; sequence MLLQGALLLLLALPSHG. The residue at position 28 (Lys-28) is a 5-hydroxylysine. Residue Lys-28 is glycosylated (O-linked (Gal...) hydroxylysine). Residues 29-100 are disordered; that stretch reads GACAGWMAGI…GTPGRKGEPG (72 aa). Residue Cys-31 is modified to S-(2-succinyl)cysteine. A 4-hydroxyproline mark is found at Pro-39, Pro-42, and Pro-48. The region spanning 43 to 102 is the Collagen-like domain; that stretch reads GHNGTPGRDGRDGTPGEKGEKGDPGLVGPKGDTGETGITGIEGPRGFPGTPGRKGEPGES. Residues 50 to 65 show a composition bias toward basic and acidic residues; sequence RDGRDGTPGEKGEKGD. 5-hydroxylysine is present on residues Lys-60, Lys-63, and Lys-72. Lys-60, Lys-63, and Lys-72 each carry an O-linked (Gal...) hydroxylysine glycan. Pro-86 is modified (4-hydroxyproline). Lys-96 is modified (5-hydroxylysine). O-linked (Gal...) hydroxylysine glycosylation occurs at Lys-96. In terms of domain architecture, C1q spans 103–240; the sequence is AYVYRSAFSV…GFLLYHNIVE (138 aa).

Homomultimer. Forms trimers, hexamers and 12- to 18-mers. The trimers (low molecular weight complexes / LMW) are assembled via non-covalent interactions of the collagen-like domains in a triple helix and hydrophobic interactions within the globular C1q domain. Several trimers can associate to form disulfide-linked hexamers (middle molecular weight complexes / MMW) and larger complexes (higher molecular weight / HMW). The HMW-complex assembly is also modulated by the degree of lysine hydroxylation and glycosylation. LMW, MMW and HMW complexes bind to HBEGF, MMW and HMW complexes bind to PDGFB, and HMW complex binds to FGF2. Interacts with CTRP9 via the C1q domain (heterotrimeric complex). Post-translationally, HMW complexes are more extensively glycosylated than smaller oligomers. Hydroxylation and glycosylation of the lysine residues within the collagen-like domain of adiponectin seem to be critically involved in regulating the formation and/or secretion of HMW complexes and consequently contribute to the insulin-sensitizing activity of adiponectin in hepatocytes. O-glycosylated. O-linked glycans on hydroxylysine residues consist of Glc-Gal disaccharides bound to the oxygen atom of post-translationally added hydroxyl groups. O-linked glycosylations elsewhere disialylated with the structure Neu5Acalpha2-&gt;8Neu5Acalpha2-&gt;3Gal. Sialylated by alpha 2,8-sialyltransferase III. Desialylated forms are rapidly cleared from the circulation. Not N-glycosylated. In terms of processing, succination of Cys-31 by the Krebs cycle intermediate fumarate, which leads to S-(2-succinyl)cysteine residues, inhibits polymerization and secretion of adiponectin. Adiponectin is a major target for succination in both adipocytes and adipose tissue of diabetic mammals. It was proposed that succination of proteins is a biomarker of mitochondrial stress and accumulation of Krebs cycle intermediates in adipose tissue in diabetes and that succination of adiponectin may contribute to the decrease in plasma adiponectin in diabetes.

It localises to the secreted. Polymerization and secretion of adiponectin is inhibited by succination of cysteine residues by the Krebs cycle intermediate fumarate, which leads to S-(2-succinyl)cysteine residues. Important adipokine involved in the control of fat metabolism and insulin sensitivity, with direct anti-diabetic, anti-atherogenic and anti-inflammatory activities. Stimulates AMPK phosphorylation and activation in the liver and the skeletal muscle, enhancing glucose utilization and fatty-acid combustion. Antagonizes TNF-alpha by negatively regulating its expression in various tissues such as liver and macrophages, and also by counteracting its effects. Inhibits endothelial NF-kappa-B signaling through a cAMP-dependent pathway. May play a role in cell growth, angiogenesis and tissue remodeling by binding and sequestering various growth factors with distinct binding affinities, depending on the type of complex, LMW, MMW or HMW. In Bos taurus (Bovine), this protein is Adiponectin (ADIPOQ).